The following is a 476-amino-acid chain: Transcriptional regulator claA (476 aa).

Residues 25–52 constitute a DNA-binding region (zn(2)-C6 fungal-type); sequence CDTCLKAKIKCSQAKPTCARCLQQGRQC. The disordered stretch occupies residues 63–92; sequence PSTKNLPLDQLQQPKGRTAGGTARRSLSRR. The segment covering 64-77 has biased composition (polar residues); the sequence is STKNLPLDQLQQPK.

It is found in the nucleus. Functionally, transcriptional regulator; part of the cla gene cluster that produces clavatol and ortho-quinone methide. The clavatol biosynthesis cluster cla and the terrestric acid cluster tra are both involved in the production of peniphenones and penilactones. In Penicillium crustosum (Blue mold fungus), this protein is Transcriptional regulator claA.